The primary structure comprises 302 residues: Glycine--tRNA ligase alpha subunit (302 aa).

It belongs to the class-II aminoacyl-tRNA synthetase family. Tetramer of two alpha and two beta subunits.

Its subcellular location is the cytoplasm. The enzyme catalyses tRNA(Gly) + glycine + ATP = glycyl-tRNA(Gly) + AMP + diphosphate. This chain is Glycine--tRNA ligase alpha subunit, found in Xanthomonas campestris pv. campestris (strain 8004).